Here is a 927-residue protein sequence, read N- to C-terminus: Heat shock protein hsp98 (927 aa).

The region spanning 2 to 162 is the Clp R domain; that stretch reads TSKMEFTDRA…TDAIQAIRGT (161 aa). 2 repeat regions span residues 7 to 87 and 99 to 162; these read FTDR…LVRL and MAPS…IRGT. Positions 179–428 are NBD1; sequence LAKFTIDMTA…AVRVARESQP (250 aa). 224–231 is a binding site for ATP; it reads GEPGVGKT. A coiled-coil region spans residues 429–553; sequence EIIDSLERKL…AALNAAAAET (125 aa). The interval 454 to 473 is disordered; sequence EASKARLEQAKKDAENVEEE. An NBD2 region spans residues 562 to 752; it reads VGPDQINEIV…IVVMTSNLGA (191 aa). Residue 635–642 coordinates ATP; sequence GPSGTGKT. A disordered region spans residues 908 to 927; sequence EDAVDEVAPESEMDEDLYDD.

It belongs to the ClpA/ClpB family. In terms of assembly, homohexamer, forming a ring with a central pore.

Its subcellular location is the cytoplasm. It is found in the nucleus. Functionally, required, in concert with Hsp40 and Hsp70 and small Hsps, for the dissociation, resolubilization and refolding of aggregates of damaged proteins after heat or other environmental stresses. Extracts proteins from aggregates by unfolding and threading them in an ATP-dependent process through the axial channel of the protein hexamer, after which they can be refolded by components of the Hsp70/Hsp40 chaperone system. In Neurospora crassa (strain ATCC 24698 / 74-OR23-1A / CBS 708.71 / DSM 1257 / FGSC 987), this protein is Heat shock protein hsp98 (hsp98).